The primary structure comprises 157 residues: Serine-protein kinase RsbW (157 aa).

Belongs to the anti-sigma-factor family.

It catalyses the reaction L-seryl-[protein] + ATP = O-phospho-L-seryl-[protein] + ADP + H(+). The catalysed reaction is L-threonyl-[protein] + ATP = O-phospho-L-threonyl-[protein] + ADP + H(+). In terms of biological role, negative regulator of sigma-B activity. Phosphorylates and inactivates its specific antagonist protein, RsbV. Upon phosphorylation of RsbV, RsbW is released and binds to sigma-B, thereby blocking its ability to form an RNA polymerase holoenzyme (E-sigma-B). In Listeria monocytogenes serovar 1/2a (strain ATCC BAA-679 / EGD-e), this protein is Serine-protein kinase RsbW.